The following is a 318-amino-acid chain: Thiohydrolase aneE (318 aa).

It belongs to the polyketide transferase af380 family.

It catalyses the reaction aculene D + L-prolyl-[peptidyl-carrier protein] = aculene B + holo-[peptidyl-carrier protein]. The enzyme catalyses aculene C + L-prolyl-[peptidyl-carrier protein] = aculene A + holo-[peptidyl-carrier protein]. It participates in secondary metabolite biosynthesis. Its function is as follows. Thiohydrolase; part of the gene cluster that mediates the biosynthesis of aculenes, a unique type of norsesquiterpenes that contain a nordaucane skeleton linked to an L-proline moiety and are of mixed biosynthetic origin. The pathway begins with the synthesis of dauca-4,7-diene by the terpene cyclase aneC using farnesyl pyrophosphate (FPP) as substrate. The cytochrome P450 monooxygenase aneF then performs the initial oxidation at C-12 of dauca-4,7-diene to yield asperaculane D. Asperaculane D is substrate of the cytochrome P450 monooxygenase aneD for C-10 hydroxylation to yield asperaculane E. The cytochrome P450 monooxygenase aneG then converts asperaculane E into aculene D via C-2 oxidation. The monomodular nonribosomal peptide synthtase aneB adenylates L-proline and the thiohydrolase aneE transfers this activated L-proline derivative to aculenes D and C to produce respectively aculenes B and A. The dioxygenase aneA converts aculene D into aculene C, and aculene B into aculene A by introducing the 5,6-alkene moiety. Asperculanes A, B, C and F, as well as 14-prolyl asperculane C, might be shunt products of the pathway. In Aspergillus aculeatus (strain ATCC 16872 / CBS 172.66 / WB 5094), this protein is Thiohydrolase aneE.